We begin with the raw amino-acid sequence, 443 residues long: ATP-dependent protease ATPase subunit HslU (443 aa).

ATP contacts are provided by residues I18, 60-65 (GVGKTE), D256, E321, and R393.

Belongs to the ClpX chaperone family. HslU subfamily. As to quaternary structure, a double ring-shaped homohexamer of HslV is capped on each side by a ring-shaped HslU homohexamer. The assembly of the HslU/HslV complex is dependent on binding of ATP.

It is found in the cytoplasm. Its function is as follows. ATPase subunit of a proteasome-like degradation complex; this subunit has chaperone activity. The binding of ATP and its subsequent hydrolysis by HslU are essential for unfolding of protein substrates subsequently hydrolyzed by HslV. HslU recognizes the N-terminal part of its protein substrates and unfolds these before they are guided to HslV for hydrolysis. This Escherichia coli O17:K52:H18 (strain UMN026 / ExPEC) protein is ATP-dependent protease ATPase subunit HslU.